The primary structure comprises 91 residues: Progonadoliberin-1 (91 aa).

The first 21 residues, 1-21 (MVVKTWMPWLLVSSVLSQGCC), serve as a signal peptide directing secretion. At glutamine 22 the chain carries Pyrrolidone carboxylic acid. Glycine amide is present on glycine 31.

The protein belongs to the GnRH family. In terms of tissue distribution, expressed in the cell bodies of a cluster of neurons in the preoptic region.

It localises to the secreted. Stimulates the secretion of gonadotropins. This chain is Progonadoliberin-1 (gnrh1), found in Oryzias latipes (Japanese rice fish).